A 133-amino-acid chain; its full sequence is Small ribosomal subunit protein uS8 (133 aa).

It belongs to the universal ribosomal protein uS8 family. Part of the 30S ribosomal subunit. Contacts proteins S5 and S12.

Functionally, one of the primary rRNA binding proteins, it binds directly to 16S rRNA central domain where it helps coordinate assembly of the platform of the 30S subunit. The polypeptide is Small ribosomal subunit protein uS8 (Leptospira interrogans serogroup Icterohaemorrhagiae serovar copenhageni (strain Fiocruz L1-130)).